Consider the following 1061-residue polypeptide: Atrial natriuretic peptide receptor 1 (1061 aa).

The signal sequence occupies residues 1–32; the sequence is MPGPRRPAGSRLRLLLLLLLPPLLLLLRGSHA. Over 33 to 473 the chain is Extracellular; sequence GNLTVAVVLP…CNQDHLSTLE (441 aa). 2 N-linked (GlcNAc...) asparagine glycosylation sites follow: Asn34 and Asn45. 3 residues coordinate chloride: Ser85, Gly117, and Cys118. Cystine bridges form between Cys92–Cys118 and Cys196–Cys245. 5 N-linked (GlcNAc...) asparagine glycosylation sites follow: Asn212, Asn338, Asn379, Asn386, and Asn427. A disulfide bridge connects residues Cys455 and Cys464. A helical membrane pass occupies residues 474 to 494; sequence VLALVGSLSLLGILIVSFFIY. Over 495 to 1061 the chain is Cytoplasmic; that stretch reads RKMQLEKELA…LGERGSSTRG (567 aa). Phosphoserine occurs at positions 519 and 529. In terms of domain architecture, Protein kinase spans 528-805; it reads GSRLTLSGRG…QIRLTLRKFN (278 aa). At Thr532 the chain carries Phosphothreonine. Residues Ser534, Ser538, and Ser542 each carry the phosphoserine modification. Thr545 carries the phosphothreonine modification. Residues 876–1006 enclose the Guanylate cyclase domain; that stretch reads TIYFSDIVGF…DTVNTASRME (131 aa).

It belongs to the adenylyl cyclase class-4/guanylyl cyclase family. Homodimer. Phosphorylation of the protein kinase-like domain is required for full activation by ANP.

The protein resides in the membrane. The catalysed reaction is GTP = 3',5'-cyclic GMP + diphosphate. In terms of biological role, receptor for the atrial natriuretic peptide NPPA/ANP and the brain natriuretic peptide NPPB/BNP which are potent vasoactive hormones playing a key role in cardiovascular homeostasis. Plays an essential role in the regulation of endothelial cell senescence and vascular aging. Upon activation by ANP or BNP, stimulates the production of cyclic guanosine monophosphate (cGMP) that promotes vascular tone and volume homeostasis by activation of protein kinase cGMP-dependent 1/PRKG1 and subsequently PRKAA1, thereby controlling blood pressure and maintaining cardiovascular homeostasis. In Homo sapiens (Human), this protein is Atrial natriuretic peptide receptor 1.